Reading from the N-terminus, the 294-residue chain is Glutamyl-Q tRNA(Asp) synthetase (294 aa).

L-glutamate-binding positions include 7–11 (RFAPS) and glutamate 43. The 'HIGH' region motif lies at 10–20 (PSPSGPLHFGS). Residues cysteine 99, cysteine 101, tyrosine 113, and cysteine 117 each coordinate Zn(2+). The L-glutamate site is built by tyrosine 168 and arginine 186. The 'KMSKS' region signature appears at 224–228 (KLSKQ). Lysine 227 contributes to the ATP binding site.

The protein belongs to the class-I aminoacyl-tRNA synthetase family. GluQ subfamily. Zn(2+) serves as cofactor.

Catalyzes the tRNA-independent activation of glutamate in presence of ATP and the subsequent transfer of glutamate onto a tRNA(Asp). Glutamate is transferred on the 2-amino-5-(4,5-dihydroxy-2-cyclopenten-1-yl) moiety of the queuosine in the wobble position of the QUC anticodon. The protein is Glutamyl-Q tRNA(Asp) synthetase of Vibrio parahaemolyticus serotype O3:K6 (strain RIMD 2210633).